We begin with the raw amino-acid sequence, 331 residues long: GTP 3',8-cyclase (331 aa).

The 225-residue stretch at 9–233 (PFGRRITYLR…VRSSKVTGGP (225 aa)) folds into the Radical SAM core domain. Arg18 contacts GTP. The [4Fe-4S] cluster site is built by Cys25 and Cys29. Tyr31 contacts S-adenosyl-L-methionine. Residue Cys32 coordinates [4Fe-4S] cluster. Arg67 is a binding site for GTP. Gly71 lines the S-adenosyl-L-methionine pocket. Residue Thr98 coordinates GTP. Ser122 contacts S-adenosyl-L-methionine. Lys159 serves as a coordination point for GTP. Residue Met193 coordinates S-adenosyl-L-methionine. The [4Fe-4S] cluster site is built by Cys257 and Cys260. Residue 262-264 (RVR) coordinates GTP. Cys274 contacts [4Fe-4S] cluster.

Belongs to the radical SAM superfamily. MoaA family. Monomer and homodimer. [4Fe-4S] cluster serves as cofactor.

It carries out the reaction GTP + AH2 + S-adenosyl-L-methionine = (8S)-3',8-cyclo-7,8-dihydroguanosine 5'-triphosphate + 5'-deoxyadenosine + L-methionine + A + H(+). It participates in cofactor biosynthesis; molybdopterin biosynthesis. Catalyzes the cyclization of GTP to (8S)-3',8-cyclo-7,8-dihydroguanosine 5'-triphosphate. The polypeptide is GTP 3',8-cyclase (Ectopseudomonas mendocina (strain ymp) (Pseudomonas mendocina)).